The sequence spans 333 residues: Holliday junction branch migration complex subunit RuvB (333 aa).

A large ATPase domain (RuvB-L) region spans residues 1-182 (MDERLLSGES…FGVLSRLEYY (182 aa)). ATP-binding positions include L21, R22, G63, K66, T67, T68, 129–131 (EDF), R172, Y182, and R219. T67 contacts Mg(2+). Positions 183–253 (TVDQLSAIVE…ITQMALELLQ (71 aa)) are small ATPAse domain (RuvB-S). The head domain (RuvB-H) stretch occupies residues 256–333 (KLGLDHIDHK…EHFGMEIPKV (78 aa)). DNA-binding residues include R311 and R316.

It belongs to the RuvB family. Homohexamer. Forms an RuvA(8)-RuvB(12)-Holliday junction (HJ) complex. HJ DNA is sandwiched between 2 RuvA tetramers; dsDNA enters through RuvA and exits via RuvB. An RuvB hexamer assembles on each DNA strand where it exits the tetramer. Each RuvB hexamer is contacted by two RuvA subunits (via domain III) on 2 adjacent RuvB subunits; this complex drives branch migration. In the full resolvosome a probable DNA-RuvA(4)-RuvB(12)-RuvC(2) complex forms which resolves the HJ.

It is found in the cytoplasm. The enzyme catalyses ATP + H2O = ADP + phosphate + H(+). In terms of biological role, the RuvA-RuvB-RuvC complex processes Holliday junction (HJ) DNA during genetic recombination and DNA repair, while the RuvA-RuvB complex plays an important role in the rescue of blocked DNA replication forks via replication fork reversal (RFR). RuvA specifically binds to HJ cruciform DNA, conferring on it an open structure. The RuvB hexamer acts as an ATP-dependent pump, pulling dsDNA into and through the RuvAB complex. RuvB forms 2 homohexamers on either side of HJ DNA bound by 1 or 2 RuvA tetramers; 4 subunits per hexamer contact DNA at a time. Coordinated motions by a converter formed by DNA-disengaged RuvB subunits stimulates ATP hydrolysis and nucleotide exchange. Immobilization of the converter enables RuvB to convert the ATP-contained energy into a lever motion, pulling 2 nucleotides of DNA out of the RuvA tetramer per ATP hydrolyzed, thus driving DNA branch migration. The RuvB motors rotate together with the DNA substrate, which together with the progressing nucleotide cycle form the mechanistic basis for DNA recombination by continuous HJ branch migration. Branch migration allows RuvC to scan DNA until it finds its consensus sequence, where it cleaves and resolves cruciform DNA. The protein is Holliday junction branch migration complex subunit RuvB of Bacillus cereus (strain G9842).